The sequence spans 379 residues: Lipid-A-disaccharide synthase (379 aa).

This sequence belongs to the LpxB family.

It catalyses the reaction a lipid X + a UDP-2-N,3-O-bis[(3R)-3-hydroxyacyl]-alpha-D-glucosamine = a lipid A disaccharide + UDP + H(+). It participates in bacterial outer membrane biogenesis; LPS lipid A biosynthesis. Its function is as follows. Condensation of UDP-2,3-diacylglucosamine and 2,3-diacylglucosamine-1-phosphate to form lipid A disaccharide, a precursor of lipid A, a phosphorylated glycolipid that anchors the lipopolysaccharide to the outer membrane of the cell. The chain is Lipid-A-disaccharide synthase from Aeromonas hydrophila subsp. hydrophila (strain ATCC 7966 / DSM 30187 / BCRC 13018 / CCUG 14551 / JCM 1027 / KCTC 2358 / NCIMB 9240 / NCTC 8049).